A 179-amino-acid polypeptide reads, in one-letter code: Large ribosomal subunit protein uL5 (179 aa).

This sequence belongs to the universal ribosomal protein uL5 family. Part of the 50S ribosomal subunit; part of the 5S rRNA/L5/L18/L25 subcomplex. Contacts the 5S rRNA and the P site tRNA. Forms a bridge to the 30S subunit in the 70S ribosome.

Its function is as follows. This is one of the proteins that bind and probably mediate the attachment of the 5S RNA into the large ribosomal subunit, where it forms part of the central protuberance. In the 70S ribosome it contacts protein S13 of the 30S subunit (bridge B1b), connecting the 2 subunits; this bridge is implicated in subunit movement. Contacts the P site tRNA; the 5S rRNA and some of its associated proteins might help stabilize positioning of ribosome-bound tRNAs. The protein is Large ribosomal subunit protein uL5 of Burkholderia mallei (strain ATCC 23344).